Consider the following 300-residue polypeptide: N-acetylmuramic acid 6-phosphate etherase (300 aa).

The SIS domain maps to 57-220; it reads VAAALRAGGR…STGAMIRIGK (164 aa). Glu85 acts as the Proton donor in catalysis. Residue Glu116 is part of the active site.

Belongs to the GCKR-like family. MurNAc-6-P etherase subfamily. In terms of assembly, homodimer.

It catalyses the reaction N-acetyl-D-muramate 6-phosphate + H2O = N-acetyl-D-glucosamine 6-phosphate + (R)-lactate. Its pathway is amino-sugar metabolism; 1,6-anhydro-N-acetylmuramate degradation. It participates in amino-sugar metabolism; N-acetylmuramate degradation. It functions in the pathway cell wall biogenesis; peptidoglycan recycling. Its function is as follows. Specifically catalyzes the cleavage of the D-lactyl ether substituent of MurNAc 6-phosphate, producing GlcNAc 6-phosphate and D-lactate. Together with AnmK, is also required for the utilization of anhydro-N-acetylmuramic acid (anhMurNAc) either imported from the medium or derived from its own cell wall murein, and thus plays a role in cell wall recycling. The polypeptide is N-acetylmuramic acid 6-phosphate etherase (Klebsiella aerogenes (Enterobacter aerogenes)).